The following is a 317-amino-acid chain: 4-diphosphocytidyl-2-C-methyl-D-erythritol kinase (317 aa).

Residue K11 is part of the active site. 99–109 (PVAAGLAGGST) contributes to the ATP binding site. D141 is an active-site residue.

Belongs to the GHMP kinase family. IspE subfamily.

It carries out the reaction 4-CDP-2-C-methyl-D-erythritol + ATP = 4-CDP-2-C-methyl-D-erythritol 2-phosphate + ADP + H(+). The protein operates within isoprenoid biosynthesis; isopentenyl diphosphate biosynthesis via DXP pathway; isopentenyl diphosphate from 1-deoxy-D-xylulose 5-phosphate: step 3/6. In terms of biological role, catalyzes the phosphorylation of the position 2 hydroxy group of 4-diphosphocytidyl-2C-methyl-D-erythritol. This chain is 4-diphosphocytidyl-2-C-methyl-D-erythritol kinase, found in Trichormus variabilis (strain ATCC 29413 / PCC 7937) (Anabaena variabilis).